A 336-amino-acid chain; its full sequence is Fructose-1,6-bisphosphatase class 1 (336 aa).

The Mg(2+) site is built by Glu90, Asp112, Leu114, and Asp115. Residues 115–118 (DGSS), Asn211, and Lys277 each bind substrate. Glu283 contributes to the Mg(2+) binding site.

It belongs to the FBPase class 1 family. Homotetramer. Requires Mg(2+) as cofactor.

The protein resides in the cytoplasm. It catalyses the reaction beta-D-fructose 1,6-bisphosphate + H2O = beta-D-fructose 6-phosphate + phosphate. Its pathway is carbohydrate biosynthesis; gluconeogenesis. In Pseudomonas savastanoi pv. phaseolicola (strain 1448A / Race 6) (Pseudomonas syringae pv. phaseolicola (strain 1448A / Race 6)), this protein is Fructose-1,6-bisphosphatase class 1.